A 119-amino-acid chain; its full sequence is Large ribosomal subunit protein bL12 (119 aa).

This sequence belongs to the bacterial ribosomal protein bL12 family. In terms of assembly, homodimer. Part of the ribosomal stalk of the 50S ribosomal subunit. Forms a multimeric L10(L12)X complex, where L10 forms an elongated spine to which 2 to 4 L12 dimers bind in a sequential fashion. Binds GTP-bound translation factors.

Functionally, forms part of the ribosomal stalk which helps the ribosome interact with GTP-bound translation factors. Is thus essential for accurate translation. This is Large ribosomal subunit protein bL12 from Bacillus anthracis (strain A0248).